The sequence spans 167 residues: Leptin (167 aa).

An N-terminal signal peptide occupies residues 1 to 21 (MRCGPLCRFLWLWPYLSYIEA). A disulfide bridge connects residues Cys-117 and Cys-167.

It belongs to the leptin family.

The protein localises to the secreted. Functionally, key player in the regulation of energy balance and body weight control. Once released into the circulation, has central and peripheral effects by binding LEPR, found in many tissues, which results in the activation of several major signaling pathways. In the hypothalamus, acts as an appetite-regulating factor that induces a decrease in food intake and an increase in energy consumption by inducing anorexinogenic factors and suppressing orexigenic neuropeptides, also regulates bone mass and secretion of hypothalamo-pituitary-adrenal hormones. In the periphery, increases basal metabolism, influences reproductive function, regulates pancreatic beta-cell function and insulin secretion, is pro-angiogenic for endothelial cell and affects innate and adaptive immunity. In the arcuate nucleus of the hypothalamus, activates by depolarization POMC neurons inducing FOS and SOCS3 expression to release anorexigenic peptides and inhibits by hyperpolarization NPY neurons inducing SOCS3 with a consequent reduction on release of orexigenic peptides. In addition to its known satiety inducing effect, has a modulatory role in nutrient absorption. In the intestine, reduces glucose absorption by enterocytes by activating PKC and leading to a sequential activation of p38, PI3K and ERK signaling pathways which exerts an inhibitory effect on glucose absorption. Acts as a growth factor on certain tissues, through the activation of different signaling pathways increases expression of genes involved in cell cycle regulation such as CCND1, via JAK2-STAT3 pathway, or VEGFA, via MAPK1/3 and PI3K-AKT1 pathways. May also play an apoptotic role via JAK2-STAT3 pathway and up-regulation of BIRC5 expression. Pro-angiogenic, has mitogenic activity on vascular endothelial cells and plays a role in matrix remodeling by regulating the expression of matrix metalloproteinases (MMPs) and tissue inhibitors of metalloproteinases (TIMPs). In innate immunity, modulates the activity and function of neutrophils by increasing chemotaxis and the secretion of oxygen radicals. Increases phagocytosis by macrophages and enhances secretion of pro-inflammatory mediators. Increases cytotoxic ability of NK cells. Plays a pro-inflammatory role, in synergy with IL1B, by inducing NOS2 which promotes the production of IL6, IL8 and Prostaglandin E2, through a signaling pathway that involves JAK2, PI3K, MAP2K1/MEK1 and MAPK14/p38. In adaptive immunity, promotes the switch of memory T-cells towards T helper-1 cell immune responses. Increases CD4(+)CD25(-) T-cell proliferation and reduces autophagy during TCR (T-cell receptor) stimulation, through MTOR signaling pathway activation and BCL2 up-regulation. This chain is Leptin (LEP), found in Ursus thibetanus (Asiatic black bear).